Here is a 514-residue protein sequence, read N- to C-terminus: Peptide chain release factor 3 (514 aa).

The region spanning 8–268 is the tr-type G domain; sequence KKRRTFAIIS…TFLKFAPEPH (261 aa). Residues 17–24, 85–89, and 139–142 each bind GTP; these read SHPDAGKT, DTPGH, and NKLD.

This sequence belongs to the TRAFAC class translation factor GTPase superfamily. Classic translation factor GTPase family. PrfC subfamily.

It is found in the cytoplasm. Functionally, increases the formation of ribosomal termination complexes and stimulates activities of RF-1 and RF-2. It binds guanine nucleotides and has strong preference for UGA stop codons. It may interact directly with the ribosome. The stimulation of RF-1 and RF-2 is significantly reduced by GTP and GDP, but not by GMP. In Streptococcus pneumoniae (strain Hungary19A-6), this protein is Peptide chain release factor 3.